We begin with the raw amino-acid sequence, 509 residues long: GMP synthase [glutamine-hydrolyzing] (509 aa).

The 190-residue stretch at 4–193 (NVLILDFGSQ…LIKIAGTKAT (190 aa)) folds into the Glutamine amidotransferase type-1 domain. The active-site Nucleophile is the Cys79. Active-site residues include His167 and Glu169. Residues 194 to 384 (WTPGKFVDLT…LGIDKELLGR (191 aa)) enclose the GMPS ATP-PPase domain. 221–227 (SGGVDST) serves as a coordination point for ATP.

As to quaternary structure, homodimer.

It carries out the reaction XMP + L-glutamine + ATP + H2O = GMP + L-glutamate + AMP + diphosphate + 2 H(+). The protein operates within purine metabolism; GMP biosynthesis; GMP from XMP (L-Gln route): step 1/1. Functionally, catalyzes the synthesis of GMP from XMP. In Christiangramia forsetii (strain DSM 17595 / CGMCC 1.15422 / KT0803) (Gramella forsetii), this protein is GMP synthase [glutamine-hydrolyzing].